The following is a 343-amino-acid chain: Methionine import ATP-binding protein MetN 1 (343 aa).

An ABC transporter domain is found at 2–241 (IKLSNITKVF…PKTPLAQKFI (240 aa)). ATP is bound at residue 38-45 (GASGAGKS).

It belongs to the ABC transporter superfamily. Methionine importer (TC 3.A.1.24) family. As to quaternary structure, the complex is composed of two ATP-binding proteins (MetN), two transmembrane proteins (MetI) and a solute-binding protein (MetQ).

Its subcellular location is the cell inner membrane. It carries out the reaction L-methionine(out) + ATP + H2O = L-methionine(in) + ADP + phosphate + H(+). The enzyme catalyses D-methionine(out) + ATP + H2O = D-methionine(in) + ADP + phosphate + H(+). In terms of biological role, part of the ABC transporter complex MetNIQ involved in methionine import. Responsible for energy coupling to the transport system. This Salmonella choleraesuis (strain SC-B67) protein is Methionine import ATP-binding protein MetN 1.